The sequence spans 138 residues: Phospholipase A2 homolog (138 aa).

The N-terminal stretch at 1-16 (MRALWIVAVWLIGVEG) is a signal peptide. 7 disulfide bridges follow: Cys42-Cys131, Cys44-Cys60, Cys59-Cys111, Cys65-Cys138, Cys66-Cys104, Cys73-Cys97, and Cys91-Cys102. Positions 121–133 (KKYTYYPNFLCKG) are important for membrane-damaging activities in eukaryotes and bacteria; heparin-binding.

The protein belongs to the phospholipase A2 family. Group II subfamily. S49 sub-subfamily. Monomer. As to expression, expressed by the venom gland.

Its subcellular location is the secreted. Snake venom phospholipase A2 homolog that lacks enzymatic activity. Shows high myotoxin activities and displays edema-inducing activities. Has cytotoxic activities against HUVEC cells (LC(50)=5.0 uL) and human lung adenocarcinoma A549 cells (LC(50)=5.2 uL). The polypeptide is Phospholipase A2 homolog (Echis ocellatus (Ocellated saw-scaled viper)).